Reading from the N-terminus, the 226-residue chain is Ras-related protein Rab11A (226 aa).

GTP-binding positions include 24–32 (GDSAVGKSQ), 43–49 (SLDSKST), 72–76 (DTAGQ), 130–133 (NKCD), and 160–162 (SAL). The Effector region motif lies at 46–54 (SKSTIGVEF). S-geranylgeranyl cysteine attachment occurs at residues Cys-222 and Cys-223. Cys-223 carries the cysteine methyl ester modification. Positions 224-226 (QAS) are cleaved as a propeptide — removed in mature form.

It belongs to the small GTPase superfamily. Rab family.

It localises to the cell membrane. This chain is Ras-related protein Rab11A (RAB11A), found in Lotus japonicus (Lotus corniculatus var. japonicus).